A 630-amino-acid chain; its full sequence is 1-deoxy-D-xylulose-5-phosphate synthase (630 aa).

Thiamine diphosphate contacts are provided by residues His72 and Gly113–Ser115. Position 144 (Asp144) interacts with Mg(2+). Residues Gly145–Ala146, Asn173, Tyr284, and Glu367 each bind thiamine diphosphate. Asn173 lines the Mg(2+) pocket.

The protein belongs to the transketolase family. DXPS subfamily. Homodimer. Requires Mg(2+) as cofactor. It depends on thiamine diphosphate as a cofactor.

The enzyme catalyses D-glyceraldehyde 3-phosphate + pyruvate + H(+) = 1-deoxy-D-xylulose 5-phosphate + CO2. It functions in the pathway metabolic intermediate biosynthesis; 1-deoxy-D-xylulose 5-phosphate biosynthesis; 1-deoxy-D-xylulose 5-phosphate from D-glyceraldehyde 3-phosphate and pyruvate: step 1/1. Catalyzes the acyloin condensation reaction between C atoms 2 and 3 of pyruvate and glyceraldehyde 3-phosphate to yield 1-deoxy-D-xylulose-5-phosphate (DXP). The protein is 1-deoxy-D-xylulose-5-phosphate synthase of Bacillus cereus (strain AH187).